The primary structure comprises 89 residues: MSQQKGKKSRINVEIYGQQYSVVGDESTSHIRMVAAIVDDKMRELNAKNPSLDTSRLAVLTAVNVIHDYIKLKEEHEKLKESMTKKGME.

It belongs to the ZapA family. Type 2 subfamily. In terms of assembly, homodimer. Interacts with FtsZ.

Its subcellular location is the cytoplasm. Functionally, activator of cell division through the inhibition of FtsZ GTPase activity, therefore promoting FtsZ assembly into bundles of protofilaments necessary for the formation of the division Z ring. It is recruited early at mid-cell but it is not essential for cell division. In Bacillus thuringiensis (strain Al Hakam), this protein is Cell division protein ZapA.